The chain runs to 262 residues: uncharacterized protein (262 aa).

Helical transmembrane passes span 7–27 (LAVAISFFVFGASVLYSLAHM), 58–78 (DTLGECLVLVVAVMVSWIVFG), 114–134 (FLAFPMSVLMVALGIITVLGG), 140–160 (GGFQGGALIAAAFILSVIAFG), 179–199 (GALGYLLLGVAGMFIGGYYLF), and 216–236 (IITAGIIPYLNIAVGLKVLAG).

It is found in the cell membrane. This is an uncharacterized protein from Methanocaldococcus jannaschii (strain ATCC 43067 / DSM 2661 / JAL-1 / JCM 10045 / NBRC 100440) (Methanococcus jannaschii).